The following is a 1285-amino-acid chain: ABC-type transporter fsqE (1285 aa).

The region spanning V54–S343 is the ABC transmembrane type-1 1 domain. The next 6 membrane-spanning stretches (helical) occupy residues I57–V77, L102–F122, L176–M196, I203–V223, V281–W301, and M312–I332. Residues L380–K622 enclose the ABC transporter 1 domain. Position 413-420 (G413–S420) interacts with ATP. N-linked (GlcNAc...) asparagine glycosylation is present at N467. The disordered stretch occupies residues D627 to N654. Transmembrane regions (helical) follow at residues L707–F727, G753–L773, G831–W851, L855–L875, I931–L951, and F968–F988. The ABC transmembrane type-1 2 domain occupies A713–K996. N1037 is a glycosylation site (N-linked (GlcNAc...) asparagine). Residues V1043–M1281 form the ABC transporter 2 domain. G1078–S1085 serves as a coordination point for ATP. N1138 is a glycosylation site (N-linked (GlcNAc...) asparagine).

It belongs to the ABC transporter superfamily. ABCB family. Multidrug resistance exporter (TC 3.A.1.201) subfamily.

The protein localises to the membrane. The protein operates within secondary metabolite biosynthesis. ABC-type transporter; part of the gene cluster that mediates the biosynthesis of the isoquinoline alkaloids fumisoquin A, fumisoquin B and fumisoquin C; as well as small amounts of fumipyrrole as a shunt metabolite. The products of the cluster lead to a brown coloration and are important for growth and conidiation. FsqE possibly plays a role of self-protection. The chain is ABC-type transporter fsqE from Aspergillus fumigatus (strain ATCC MYA-4609 / CBS 101355 / FGSC A1100 / Af293) (Neosartorya fumigata).